The chain runs to 132 residues: Ragulator complex protein LAMTOR3 homolog (132 aa).

This sequence belongs to the LAMTOR3 family. In terms of assembly, part of the Ragulator complex.

In terms of biological role, regulator of the TOR pathway, a signaling cascade that promotes cell growth in response to growth factors, energy levels, and amino acids. May activate the TOR signaling cascade in response to amino acids. The sequence is that of Ragulator complex protein LAMTOR3 homolog from Dictyostelium discoideum (Social amoeba).